Here is a 92-residue protein sequence, read N- to C-terminus: Beta-2-microglobulin (92 aa).

One can recognise an Ig-like C1-type domain in the interval 2-89 (PQIQVYSRHP…NHVSMDKPMT (88 aa)). A disulfide bridge links Cys-22 with Cys-77.

This sequence belongs to the beta-2-microglobulin family. As to quaternary structure, heterodimer of an alpha chain and a beta chain. Beta-2-microglobulin is the beta-chain of major histocompatibility complex class I molecules.

The protein resides in the secreted. Component of the class I major histocompatibility complex (MHC). Involved in the presentation of peptide antigens to the immune system. This Mus spretus (Western Mediterranean mouse) protein is Beta-2-microglobulin (B2m).